A 413-amino-acid chain; its full sequence is Serine hydroxymethyltransferase (413 aa).

Residues leucine 117 and 121 to 123 (GHL) each bind (6S)-5,6,7,8-tetrahydrofolate. Lysine 226 bears the N6-(pyridoxal phosphate)lysine mark. (6S)-5,6,7,8-tetrahydrofolate contacts are provided by residues glutamate 239 and 349–351 (SPF).

Belongs to the SHMT family. Homodimer. Requires pyridoxal 5'-phosphate as cofactor.

It is found in the cytoplasm. The catalysed reaction is (6R)-5,10-methylene-5,6,7,8-tetrahydrofolate + glycine + H2O = (6S)-5,6,7,8-tetrahydrofolate + L-serine. It functions in the pathway one-carbon metabolism; tetrahydrofolate interconversion. The protein operates within amino-acid biosynthesis; glycine biosynthesis; glycine from L-serine: step 1/1. Functionally, catalyzes the reversible interconversion of serine and glycine with tetrahydrofolate (THF) serving as the one-carbon carrier. This reaction serves as the major source of one-carbon groups required for the biosynthesis of purines, thymidylate, methionine, and other important biomolecules. Also exhibits THF-independent aldolase activity toward beta-hydroxyamino acids, producing glycine and aldehydes, via a retro-aldol mechanism. The chain is Serine hydroxymethyltransferase from Bacillus anthracis (strain A0248).